A 459-amino-acid chain; its full sequence is Putrescine aminotransferase (459 aa).

Pyridoxal 5'-phosphate-binding positions include 150–151 (GT) and glutamine 274. An N6-(pyridoxal phosphate)lysine modification is found at lysine 300. Pyridoxal 5'-phosphate is bound at residue threonine 332.

The protein belongs to the class-III pyridoxal-phosphate-dependent aminotransferase family. Putrescine aminotransferase subfamily. Pyridoxal 5'-phosphate serves as cofactor.

It carries out the reaction an alkane-alpha,omega-diamine + 2-oxoglutarate = an omega-aminoaldehyde + L-glutamate. It catalyses the reaction putrescine + 2-oxoglutarate = 1-pyrroline + L-glutamate + H2O. The catalysed reaction is cadaverine + 2-oxoglutarate = 5-aminopentanal + L-glutamate. It participates in amine and polyamine degradation; putrescine degradation; 4-aminobutanal from putrescine (transaminase route): step 1/1. In terms of biological role, catalyzes the aminotransferase reaction from putrescine to 2-oxoglutarate, leading to glutamate and 4-aminobutanal, which spontaneously cyclizes to form 1-pyrroline. This is the first step in one of two pathways for putrescine degradation, where putrescine is converted into 4-aminobutanoate (gamma-aminobutyrate or GABA) via 4-aminobutanal. Also functions as a cadaverine transaminase in a a L-lysine degradation pathway to succinate that proceeds via cadaverine, glutarate and L-2-hydroxyglutarate. This chain is Putrescine aminotransferase, found in Shigella flexneri serotype 5b (strain 8401).